The primary structure comprises 491 residues: UDP-N-acetylmuramoyl-L-alanyl-D-glutamate--2,6-diaminopimelate ligase (491 aa).

A UDP-N-acetyl-alpha-D-muramoyl-L-alanyl-D-glutamate-binding site is contributed by serine 30. Glycine 108–threonine 114 contributes to the ATP binding site. UDP-N-acetyl-alpha-D-muramoyl-L-alanyl-D-glutamate is bound by residues asparagine 149, threonine 150–threonine 151, serine 177, glutamine 183, and arginine 185. N6-carboxylysine is present on lysine 217. Meso-2,6-diaminopimelate is bound by residues arginine 383, aspartate 407–arginine 410, glycine 458, and glutamate 462. The short motif at aspartate 407–arginine 410 is the Meso-diaminopimelate recognition motif element.

The protein belongs to the MurCDEF family. MurE subfamily. It depends on Mg(2+) as a cofactor. In terms of processing, carboxylation is probably crucial for Mg(2+) binding and, consequently, for the gamma-phosphate positioning of ATP.

Its subcellular location is the cytoplasm. The enzyme catalyses UDP-N-acetyl-alpha-D-muramoyl-L-alanyl-D-glutamate + meso-2,6-diaminopimelate + ATP = UDP-N-acetyl-alpha-D-muramoyl-L-alanyl-gamma-D-glutamyl-meso-2,6-diaminopimelate + ADP + phosphate + H(+). It functions in the pathway cell wall biogenesis; peptidoglycan biosynthesis. In terms of biological role, catalyzes the addition of meso-diaminopimelic acid to the nucleotide precursor UDP-N-acetylmuramoyl-L-alanyl-D-glutamate (UMAG) in the biosynthesis of bacterial cell-wall peptidoglycan. In Listeria monocytogenes serotype 4b (strain F2365), this protein is UDP-N-acetylmuramoyl-L-alanyl-D-glutamate--2,6-diaminopimelate ligase.